The chain runs to 441 residues: Probable tRNA pseudouridine synthase D (441 aa).

Catalysis depends on Asp-89, which acts as the Nucleophile. Positions 168–393 constitute a TRUD domain; sequence GVPNFFGVQR…SKGTRREVLL (226 aa).

This sequence belongs to the pseudouridine synthase TruD family.

It catalyses the reaction uridine(13) in tRNA = pseudouridine(13) in tRNA. Its function is as follows. Could be responsible for synthesis of pseudouridine from uracil-13 in transfer RNAs. This chain is Probable tRNA pseudouridine synthase D, found in Methanosarcina acetivorans (strain ATCC 35395 / DSM 2834 / JCM 12185 / C2A).